The sequence spans 276 residues: NAD-capped RNA hydrolase NudC (276 aa).

Residue R82 coordinates substrate. C112 and C115 together coordinate Zn(2+). Substrate is bound at residue E125. C130 and C133 together coordinate Zn(2+). Y138 contacts substrate. The Nudix hydrolase domain maps to 139-262 (PRISPSMIVL…SIARYLIDLY (124 aa)). 3 residues coordinate a divalent metal cation: A172, E188, and E192. The short motif at 173 to 194 (GFAEPGESAEDCLVREVREEVA) is the Nudix box element. Residue 206-213 (QCWPFPHS) coordinates substrate. Residue E233 coordinates a divalent metal cation. Residue A255 coordinates substrate.

It belongs to the Nudix hydrolase family. NudC subfamily. In terms of assembly, homodimer. Requires Mg(2+) as cofactor. Mn(2+) serves as cofactor. Zn(2+) is required as a cofactor.

It carries out the reaction a 5'-end NAD(+)-phospho-ribonucleoside in mRNA + H2O = a 5'-end phospho-adenosine-phospho-ribonucleoside in mRNA + beta-nicotinamide D-ribonucleotide + 2 H(+). It catalyses the reaction NAD(+) + H2O = beta-nicotinamide D-ribonucleotide + AMP + 2 H(+). The enzyme catalyses NADH + H2O = reduced beta-nicotinamide D-ribonucleotide + AMP + 2 H(+). Its function is as follows. mRNA decapping enzyme that specifically removes the nicotinamide adenine dinucleotide (NAD) cap from a subset of mRNAs by hydrolyzing the diphosphate linkage to produce nicotinamide mononucleotide (NMN) and 5' monophosphate mRNA. The NAD-cap is present at the 5'-end of some mRNAs and stabilizes RNA against 5'-processing. Has preference for mRNAs with a 5'-end purine. Catalyzes the hydrolysis of a broad range of dinucleotide pyrophosphates. The protein is NAD-capped RNA hydrolase NudC of Pseudomonas putida (strain ATCC 700007 / DSM 6899 / JCM 31910 / BCRC 17059 / LMG 24140 / F1).